We begin with the raw amino-acid sequence, 329 residues long: L-arabinose-binding periplasmic protein (329 aa).

Positions 1-23 (MHKFTKALAAIGLAAVMSQSAMA) are cleaved as a signal peptide.

The protein belongs to the bacterial solute-binding protein 2 family.

Its subcellular location is the periplasm. Its function is as follows. Involved in the high-affinity L-arabinose membrane transport system. Binds with high affinity to arabinose, but can also bind D-galactose (approximately 2-fold reduction) and D-fucose (approximately 40-fold reduction). This Escherichia coli (strain K12) protein is L-arabinose-binding periplasmic protein (araF).